The following is a 154-amino-acid chain: MLNKRTTEVYALGQHISMSAHKARRVIDQIRGRSYEETLIILELMPYRACYPIFKLVYSAAANASSNMGSNEANLVISKAEVNKGTIMKRLKHRARGRSFAIQKPTCHITIVMKDISLDEYIDTDSITWSQNKKKDTTMPYYDMYSNGGTWDKK.

This sequence belongs to the universal ribosomal protein uL22 family. Part of the 50S ribosomal subunit.

Its subcellular location is the plastid. The protein resides in the chloroplast. In terms of biological role, this protein binds specifically to 23S rRNA. Its function is as follows. The globular domain of the protein is located near the polypeptide exit tunnel on the outside of the subunit, while an extended beta-hairpin is found that lines the wall of the exit tunnel in the center of the 70S ribosome. The sequence is that of Large ribosomal subunit protein uL22c (rpl22) from Guizotia abyssinica (Niger).